A 397-amino-acid chain; its full sequence is 2-isopropylmalate synthase 1 (397 aa).

Residues 6-268 enclose the Pyruvate carboxyltransferase domain; that stretch reads VIVFDTTLRD…VHGINTKEIY (263 aa). Asp-15, His-203, His-205, and Asn-239 together coordinate Mn(2+).

It belongs to the alpha-IPM synthase/homocitrate synthase family. LeuA type 1 subfamily. As to quaternary structure, homodimer. Mn(2+) is required as a cofactor.

The protein resides in the cytoplasm. The catalysed reaction is 3-methyl-2-oxobutanoate + acetyl-CoA + H2O = (2S)-2-isopropylmalate + CoA + H(+). It participates in amino-acid biosynthesis; L-leucine biosynthesis; L-leucine from 3-methyl-2-oxobutanoate: step 1/4. Catalyzes the condensation of the acetyl group of acetyl-CoA with 3-methyl-2-oxobutanoate (2-ketoisovalerate) to form 3-carboxy-3-hydroxy-4-methylpentanoate (2-isopropylmalate). The chain is 2-isopropylmalate synthase 1 from Caldanaerobacter subterraneus subsp. tengcongensis (strain DSM 15242 / JCM 11007 / NBRC 100824 / MB4) (Thermoanaerobacter tengcongensis).